Here is a 60-residue protein sequence, read N- to C-terminus: Short neurotoxin 1 (60 aa).

Cystine bridges form between Cys3–Cys22, Cys17–Cys39, Cys41–Cys52, and Cys53–Cys58.

This sequence belongs to the three-finger toxin family. Short-chain subfamily. Type I alpha-neurotoxin sub-subfamily. Expressed by the venom gland.

It is found in the secreted. Binds to muscle nicotinic acetylcholine receptor (nAChR) and inhibit acetylcholine from binding to the receptor, thereby impairing neuromuscular transmission. The protein is Short neurotoxin 1 of Dendroaspis polylepis polylepis (Black mamba).